The primary structure comprises 28 residues: Ranatuerin-2LT (28 aa).

Residues C23 and C28 are joined by a disulfide bond.

Expressed by the skin glands.

It localises to the secreted. In terms of biological role, has antibacterial activity. The chain is Ranatuerin-2LT from Rana latastei (Italian agile frog).